The chain runs to 593 residues: Dihydroxy-acid dehydratase (593 aa).

Residues 1-17 (MSQQTEPDDDAALDGDE) are compositionally biased toward acidic residues. The disordered stretch occupies residues 1–40 (MSQQTEPDDDAALDGDEPGAYGKDERLRSREVTEGPERAP). Residues 22–40 (GKDERLRSREVTEGPERAP) are compositionally biased toward basic and acidic residues. Residue C72 coordinates [2Fe-2S] cluster. D104 is a binding site for Mg(2+). [2Fe-2S] cluster is bound at residue C145. The Mg(2+) site is built by D146 and K147. N6-carboxylysine is present on K147. C217 lines the [2Fe-2S] cluster pocket. Residue E475 coordinates Mg(2+). S501 acts as the Proton acceptor in catalysis.

It belongs to the IlvD/Edd family. As to quaternary structure, homodimer. Requires [2Fe-2S] cluster as cofactor. Mg(2+) is required as a cofactor.

The enzyme catalyses (2R)-2,3-dihydroxy-3-methylbutanoate = 3-methyl-2-oxobutanoate + H2O. The catalysed reaction is (2R,3R)-2,3-dihydroxy-3-methylpentanoate = (S)-3-methyl-2-oxopentanoate + H2O. Its pathway is amino-acid biosynthesis; L-isoleucine biosynthesis; L-isoleucine from 2-oxobutanoate: step 3/4. It participates in amino-acid biosynthesis; L-valine biosynthesis; L-valine from pyruvate: step 3/4. Its function is as follows. Functions in the biosynthesis of branched-chain amino acids. Catalyzes the dehydration of (2R,3R)-2,3-dihydroxy-3-methylpentanoate (2,3-dihydroxy-3-methylvalerate) into 2-oxo-3-methylpentanoate (2-oxo-3-methylvalerate) and of (2R)-2,3-dihydroxy-3-methylbutanoate (2,3-dihydroxyisovalerate) into 2-oxo-3-methylbutanoate (2-oxoisovalerate), the penultimate precursor to L-isoleucine and L-valine, respectively. This is Dihydroxy-acid dehydratase from Natronomonas pharaonis (strain ATCC 35678 / DSM 2160 / CIP 103997 / JCM 8858 / NBRC 14720 / NCIMB 2260 / Gabara) (Halobacterium pharaonis).